The following is a 67-amino-acid chain: Protein AaeX (67 aa).

Helical transmembrane passes span 10-30 and 43-63; these read FGLSFPPVFFVLLVSLTLFFV and FVWHPALFNSALFCCLFYLLF.

The protein belongs to the AaeX family.

The protein resides in the cell membrane. In Pectobacterium carotovorum subsp. carotovorum (strain PC1), this protein is Protein AaeX.